Here is a 490-residue protein sequence, read N- to C-terminus: Aspartyl/glutamyl-tRNA(Asn/Gln) amidotransferase subunit B (490 aa).

It belongs to the GatB/GatE family. GatB subfamily. As to quaternary structure, heterotrimer of A, B and C subunits.

It catalyses the reaction L-glutamyl-tRNA(Gln) + L-glutamine + ATP + H2O = L-glutaminyl-tRNA(Gln) + L-glutamate + ADP + phosphate + H(+). The catalysed reaction is L-aspartyl-tRNA(Asn) + L-glutamine + ATP + H2O = L-asparaginyl-tRNA(Asn) + L-glutamate + ADP + phosphate + 2 H(+). Functionally, allows the formation of correctly charged Asn-tRNA(Asn) or Gln-tRNA(Gln) through the transamidation of misacylated Asp-tRNA(Asn) or Glu-tRNA(Gln) in organisms which lack either or both of asparaginyl-tRNA or glutaminyl-tRNA synthetases. The reaction takes place in the presence of glutamine and ATP through an activated phospho-Asp-tRNA(Asn) or phospho-Glu-tRNA(Gln). The sequence is that of Aspartyl/glutamyl-tRNA(Asn/Gln) amidotransferase subunit B from Methylobacterium sp. (strain 4-46).